The sequence spans 122 residues: Large ribosomal subunit protein uL14 (122 aa).

This sequence belongs to the universal ribosomal protein uL14 family. As to quaternary structure, part of the 50S ribosomal subunit. Forms a cluster with proteins L3 and L19. In the 70S ribosome, L14 and L19 interact and together make contacts with the 16S rRNA in bridges B5 and B8.

Functionally, binds to 23S rRNA. Forms part of two intersubunit bridges in the 70S ribosome. The protein is Large ribosomal subunit protein uL14 of Dehalococcoides mccartyi (strain ATCC BAA-2266 / KCTC 15142 / 195) (Dehalococcoides ethenogenes (strain 195)).